The primary structure comprises 103 residues: Co-chaperonin GroES (103 aa).

The protein belongs to the GroES chaperonin family. As to quaternary structure, heptamer of 7 subunits arranged in a ring. Interacts with the chaperonin GroEL.

The protein localises to the cytoplasm. In terms of biological role, together with the chaperonin GroEL, plays an essential role in assisting protein folding. The GroEL-GroES system forms a nano-cage that allows encapsulation of the non-native substrate proteins and provides a physical environment optimized to promote and accelerate protein folding. GroES binds to the apical surface of the GroEL ring, thereby capping the opening of the GroEL channel. This is Co-chaperonin GroES from Nostoc punctiforme (strain ATCC 29133 / PCC 73102).